The sequence spans 360 residues: MLYWLAEYLQEYMRGFAVFQYLTVRAILSVLTALGISLLLGPWVIRRLTEMRIGQAVRSDGPQTHLSKSGTPTMGGALILSAMFISTLLWSDFGNRYVWVVLIVTAIFGAVGWVDDYRKVAKRDPKGLPARWKYFWQSIAGFGAAVFLFCTAQAPAETQLFIPFFKNVALNMGLFYIIFTYFVIVGTSNAVNLTDGLDGLAIMPSVMVAGALALIAYLAGHSQFAQYLHIAYIPGAGELAVFCCALVGAGLGFLWFNTYPAQVFMGDVGALALGAALGLVAVIVRHEFVLFIMGGIFVLETVSVILQVASFKLTGRRIFRMAPIHHHFELKGWPEPRVIVRFWIITLVLVLIGLATLKFR.

The next 10 helical transmembrane spans lie at 25-45, 74-94, 97-117, 134-154, 168-188, 199-219, 236-256, 263-283, 288-308, and 339-359; these read RAIL…PWVI, MGGA…SDFG, YVWV…VDDY, YFWQ…TAQA, VALN…VGTS, GLAI…AYLA, AGEL…FLWF, VFMG…VAVI, FVLF…ILQV, and IVRF…TLKF.

This sequence belongs to the glycosyltransferase 4 family. MraY subfamily. The cofactor is Mg(2+).

The protein resides in the cell inner membrane. It carries out the reaction UDP-N-acetyl-alpha-D-muramoyl-L-alanyl-gamma-D-glutamyl-meso-2,6-diaminopimeloyl-D-alanyl-D-alanine + di-trans,octa-cis-undecaprenyl phosphate = di-trans,octa-cis-undecaprenyl diphospho-N-acetyl-alpha-D-muramoyl-L-alanyl-D-glutamyl-meso-2,6-diaminopimeloyl-D-alanyl-D-alanine + UMP. Its pathway is cell wall biogenesis; peptidoglycan biosynthesis. Functionally, catalyzes the initial step of the lipid cycle reactions in the biosynthesis of the cell wall peptidoglycan: transfers peptidoglycan precursor phospho-MurNAc-pentapeptide from UDP-MurNAc-pentapeptide onto the lipid carrier undecaprenyl phosphate, yielding undecaprenyl-pyrophosphoryl-MurNAc-pentapeptide, known as lipid I. This Cellvibrio japonicus (strain Ueda107) (Pseudomonas fluorescens subsp. cellulosa) protein is Phospho-N-acetylmuramoyl-pentapeptide-transferase.